Reading from the N-terminus, the 270-residue chain is MATYIVGDLHGCFDELQLLLKQVNYNPAQDELWLTGDLVARGAKSLECLRFVKDPKNNAKTILGNHDLHLLATLLGVKKVKPNDQVDAIFAAEDRADLQNWLRNQPLLIQHPKYGFLLTHAGISPEWNLTETIACAREAEAVLQSGHYADYIAQMYENTPDHWSAEWQGIERWRYIINVFTRMRFCYADKRLDFACKLPVEDAPNELKPWFKLDNPLFHQQDIIFGHWASLMGKADKPNIYALDTGCAWGNHLTMIRWEDKQIFTQERLK.

It belongs to the Ap4A hydrolase family.

The enzyme catalyses P(1),P(4)-bis(5'-adenosyl) tetraphosphate + H2O = 2 ADP + 2 H(+). Functionally, hydrolyzes diadenosine 5',5'''-P1,P4-tetraphosphate to yield ADP. The sequence is that of Bis(5'-nucleosyl)-tetraphosphatase, symmetrical from Actinobacillus pleuropneumoniae serotype 5b (strain L20).